Consider the following 330-residue polypeptide: Ribosome production factor 1 (330 aa).

2 disordered regions span residues methionine 1 to threonine 32 and glutamate 53 to proline 83. The span at lysine 55–arginine 70 shows a compositional bias: basic residues. Residues lysine 71–proline 83 show a composition bias toward basic and acidic residues. The region spanning proline 123–aspartate 306 is the Brix domain. An RNA-binding region spans residues valine 284–glutamine 301.

The protein resides in the nucleus. The protein localises to the nucleolus. In terms of biological role, may be required for ribosome biogenesis. The sequence is that of Ribosome production factor 1 (rpf1) from Danio rerio (Zebrafish).